The following is a 187-amino-acid chain: UPF0301 protein LPC_2717 (187 aa).

The protein belongs to the UPF0301 (AlgH) family.

The sequence is that of UPF0301 protein LPC_2717 from Legionella pneumophila (strain Corby).